The following is an 82-amino-acid chain: Sulfur carrier protein TusA (82 aa).

Catalysis depends on Cys19, which acts as the Cysteine persulfide intermediate.

This sequence belongs to the sulfur carrier protein TusA family.

Its subcellular location is the cytoplasm. In terms of biological role, sulfur carrier protein which probably makes part of a sulfur-relay system. This chain is Sulfur carrier protein TusA, found in Vibrio campbellii (strain ATCC BAA-1116).